Consider the following 71-residue polypeptide: Omega-conotoxin-like CnVIIE (71 aa).

An N-terminal signal peptide occupies residues Met1 to Ala22. Positions Asp23 to Arg45 are excised as a propeptide. 3 cysteine pairs are disulfide-bonded: Cys46–Cys61, Cys53–Cys65, and Cys60–Cys70. 4-hydroxyproline; partial is present on Pro52. Residue Cys70 is modified to Cysteine amide.

It belongs to the conotoxin M superfamily. As to expression, expressed by the venom duct.

It is found in the secreted. In terms of biological role, omega-conotoxins act at presynaptic membranes, they bind and block voltage-gated calcium channels (Cav). This is Omega-conotoxin-like CnVIIE from Conus consors (Singed cone).